The primary structure comprises 570 residues: Auxin efflux carrier component 6 (570 aa).

Residues 1–6 (MITGNE) lie on the Extracellular side of the membrane. Residues 7-27 (FYTVMCAMAPLYFAMFVAYGS) traverse the membrane as a helical segment. Topologically, residues 28–38 (VKWCKIFTPAQ) are cytoplasmic. The chain crosses the membrane as a helical span at residues 39–59 (CSGINRFVSVFAVPVLSFHFI). A (indol-3-yl)acetate-binding site is contributed by V51. The Extracellular segment spans residues 60 to 70 (SQNNPYKMDTM). The chain crosses the membrane as a helical span at residues 71–91 (FILADTLSKIFVFVLLSLWAV). Residues 92 to 100 (FFKAGGLDW) are Cytoplasmic-facing. The chain crosses the membrane as a helical span at residues 101–121 (LITLFSIATLPNTLVMGIPLL). The (indol-3-yl)acetate site is built by N112 and L114. The Extracellular portion of the chain corresponds to 122–131 (QAMYGDYTQT). Residues 132 to 152 (LMVQLVVLQCIIWYTLLLFLF) traverse the membrane as a helical segment. (indol-3-yl)acetate is bound at residue Y145. The Cytoplasmic portion of the chain corresponds to 153 to 430 (ELRAARLLIR…LSRNPNTYSS (278 aa)). Phosphoserine is present on residues S230 and S308. A helical membrane pass occupies residues 431–451 (LLGLVWSLISFKWNIPMPNIV). The Extracellular segment spans residues 452 to 454 (DFS). The helical transmembrane segment at 455–475 (IKIISDAGLGMAMFSLGLFMA) threads the bilayer. Residues 476–491 (LQPKMIPCGAKKATMG) are Cytoplasmic-facing. The helical transmembrane segment at 492-512 (MLIRFISGPLFMAGASLLVGL) threads the bilayer. Over 513–515 (RGS) the chain is Extracellular. The chain crosses the membrane as a helical span at residues 516-536 (RLHAAIVQAALPQGIVPFVFA). (indol-3-yl)acetate-binding residues include I530 and V531. The Cytoplasmic segment spans residues 537 to 549 (REYNLHPDLLSTL). The chain crosses the membrane as a helical span at residues 550–570 (VIFGMIVSLPVTILYYVLLGL).

This sequence belongs to the auxin efflux carrier (TC 2.A.69.1) family. As to quaternary structure, homodimer. As to expression, expressed in the vasculature of the primary root, cotyledons, floral stem, sepals and the main transmitting tract of the reproductive silique. Expressed in embryos, shoot meristem, root tip and lateral root meristems. Expressed in the nectaries and the floral organ boundaries of the anthers. Detected in pollen. Expressed in broad subepidermal domains that narrowed to sites of vein formation. Expressed in veins of mature leaves.

Its subcellular location is the endoplasmic reticulum membrane. In terms of biological role, component of the intracellular auxin-transport pathway. Regulates auxin transport and auxin homeostasis. Directly involved in the regulation of nectar production. Involved in unfolded protein response (UPR) activation. Involved in the control of vein patterning. Redundantly with PIN8, inhibits the vein-formation-promoting functions of PIN5. PIN5, PIN6, and PIN8 control vein network geometry, but they are expressed in mutually exclusive domains of leaf vascular cells. The polypeptide is Auxin efflux carrier component 6 (Arabidopsis thaliana (Mouse-ear cress)).